We begin with the raw amino-acid sequence, 282 residues long: Bis(5'-nucleosyl)-tetraphosphatase, symmetrical (282 aa).

Belongs to the Ap4A hydrolase family.

It catalyses the reaction P(1),P(4)-bis(5'-adenosyl) tetraphosphate + H2O = 2 ADP + 2 H(+). Hydrolyzes diadenosine 5',5'''-P1,P4-tetraphosphate to yield ADP. The chain is Bis(5'-nucleosyl)-tetraphosphatase, symmetrical from Burkholderia thailandensis (strain ATCC 700388 / DSM 13276 / CCUG 48851 / CIP 106301 / E264).